The primary structure comprises 457 residues: Multidrug resistance protein MdtK (457 aa).

The next 12 helical transmembrane spans lie at 11-31 (LLALAIPVILAQIAQTAMGFV), 53-73 (IWLPAILFGHGLLLALTPVIA), 93-113 (WLAGFVSVLIMLVLWNAGYII), 127-147 (AVGYLRALLWGAPGYLFFQVA), 160-180 (GMVMGFIGLLVNIPVNYIFIY), 189-209 (GGVGCGVATAAVYWVMFLAMV), 243-263 (LPIALALFFEVTLFAVVALLV), 276-296 (IALNFSSLMFVLPMSLAAAVT), 314-334 (AARTGLMVGVCMATLTAIFTV), 350-370 (VVTLAAHLMLLAAVYQISDSI), 387-407 (IFYITFTAYWVLGLPSGYILA), and 418-438 (PAGFWIGFIIGLTSAAIMMML).

Belongs to the multi antimicrobial extrusion (MATE) (TC 2.A.66.1) family. MdtK subfamily.

The protein localises to the cell inner membrane. Its function is as follows. Multidrug efflux pump that functions probably as a Na(+)/drug antiporter. In Escherichia coli (strain SE11), this protein is Multidrug resistance protein MdtK.